Reading from the N-terminus, the 441-residue chain is Zinc finger protein ZIC 3 (441 aa).

The C2H2-type 1; atypical zinc finger occupies 222–257 (LSCKWLEESPMNRPQKTCDRTFSSMHELVTHMTMEH). Residues 266–293 (HICYWEECPRGGKSFKAKYKLVNHIRVH) form a C2H2-type 2; atypical zinc finger. C2H2-type zinc fingers lie at residues 299–323 (FPCP…KRTH), 329–353 (FKCE…MHVH), and 359–381 (YICK…MKVH). A disordered region spans residues 375-441 (RKHMKVHESQ…LPPNFNEWYV (67 aa)). The span at 383 to 399 (SQGSDSSPAASSGYESA) shows a compositional bias: low complexity. Polar residues predominate over residues 406–429 (SANSEEPSKNSSATHQTNNSSHNT).

The protein belongs to the GLI C2H2-type zinc-finger protein family.

Its subcellular location is the nucleus. The protein localises to the cytoplasm. Its function is as follows. Probably acts as a transcriptional activator. May bind to the minimal GLI-consensus sequence 5'-GGGTGGTC-3'. Can determine the ectodermal cell fate and promote the earliest step of neural and neural crest development. Involved in establishing left-right asymmetry in the embryo. This Xenopus tropicalis (Western clawed frog) protein is Zinc finger protein ZIC 3 (zic3).